The following is an 878-amino-acid chain: Enoyl-CoA isomerase/hydratase claC (878 aa).

Positions 541 to 561 are disordered; sequence VGPASTEATSPVVEPSTMESD. Residues 677 to 681 and Gly-724 each bind substrate; that span reads AGADL.

The protein belongs to the enoyl-CoA hydratase/isomerase family.

Its pathway is secondary metabolite biosynthesis. In terms of biological role, enoyl-CoA isomerase/hydratase; part of the cla gene cluster that produces clavatol and ortho-quinone methide. The clavatol biosynthesis cluster cla and the terrestric acid cluster tra are both involved in the production of peniphenones and penilactones. The non-reducing PKS claF is responsible for the formation of clavatol from successive condensations of 3 malonyl-CoA units, presumably with a simple acetyl-CoA starter unit, and 2 methylation steps. The esterase claE probably collaborates with claF by catalyzing the hydrolysis of ACP-bound acyl intermediates to free the ACP from stalled intermediates. The clavatol oxidase claD then converts clavatol to hydroxyclavatol. Spontaneous dehydration of hydroxyclavatol leads to the accumulation of the highly active ortho-quinone methide. On the other hand, the PKS-NRPS hybrid traA is involved in the formation of crustosic acid, with the help of traB and traD. The polyketide synthase module (PKS) of traA is responsible for the synthesis of the polyketide backbone via the condensation of an acetyl-CoA starter unit with 3 malonyl-CoA units. The downstream nonribosomal peptide synthetase (NRPS) module then amidates the carboxyl end of the polyketide with L-malic acid. Because traA lacks a designated enoylreductase (ER) domain, the required activity is provided the enoyl reductase traG. Crustosic acid undergoes decarboxylation and isomerization to the terrestric acid, catalyzed by the 2-oxoglutarate-dependent dioxygenase traH. Both acids are further converted to the 2 gamma-butyrolactones (R)-5-methyltetronic acid and (S)-5-carboxylmethyltetronic acid, with involvement of the cytochrome P450 monooxygenase claJ. Spontaneous addition of the methide to these gamma-butyrolactones leads to peniphenone D and penilactone D, which undergo again stereospecific attacking by methide to give penilactones A and B. The function of the enoyl-CoA isomerase/hydratase claC has not been investigated yet. This chain is Enoyl-CoA isomerase/hydratase claC, found in Penicillium crustosum (Blue mold fungus).